Consider the following 474-residue polypeptide: Cytochrome c biogenesis protein CcsB (474 aa).

Helical transmembrane passes span 36–56 (LKLA…GTVI), 96–116 (SWWF…CTFR), and 182–202 (VGPI…MIGA).

The protein belongs to the Ccs1/CcsB family. As to quaternary structure, may interact with CcsA.

It localises to the cell inner membrane. Required during biogenesis of c-type cytochromes (cytochrome c6 and cytochrome f) at the step of heme attachment. This Gloeobacter violaceus (strain ATCC 29082 / PCC 7421) protein is Cytochrome c biogenesis protein CcsB.